The sequence spans 144 residues: Bombinins BLP-7/GH-2 (144 aa).

An N-terminal signal peptide occupies residues 1 to 18; that stretch reads MNFKYIVAVSFLIASTYA. The propeptide occupies 19-43; that stretch reads RSVKNDEQSLSQRDVLEEESLREIR. An Asparagine amide modification is found at Asn-70. Positions 74–123 are excised as a propeptide; the sequence is TAEEHEVMKRLEAVMRDLDSLDYPEEASEMETRSFNQEEIANLFTKKEKR. Ile-143 is subject to Isoleucine amide.

Belongs to the bombinin family. As to expression, expressed by the skin glands.

It is found in the secreted. In terms of biological role, antimicrobial peptide with activity against Gram-positive and -negative bacteria and fungi. Shows activity against P.acnes (MIC=5 uM), E.coli (MIC=5-6.3 uM), S.aureus (MIC=5-6.3 uM), M.luteus, S.cerevisiae and C.albicans (MIC=10-12.5 uM). Also reduces the production of interleukin (IL)-8 and granulocyte-macrophage colony stimulating factor (CSF2) in normal human epidermal keratinocytes (NHEKs). Shows anticancer activity against three human hepatoma cell lines. In vivo, using the rat ear edema model, suppress P.acnes-induced skin inflammation, significantly reducing the ear thickness. Shows weak hemolytic activity against human erythrocytes. Functionally, shows weak antimicrobial activity but high hemolytic activity. This chain is Bombinins BLP-7/GH-2, found in Bombina orientalis (Oriental fire-bellied toad).